The following is a 333-amino-acid chain: 6-phosphogluconolactonase (333 aa).

It belongs to the cycloisomerase 2 family.

It catalyses the reaction 6-phospho-D-glucono-1,5-lactone + H2O = 6-phospho-D-gluconate + H(+). It participates in carbohydrate degradation; pentose phosphate pathway; D-ribulose 5-phosphate from D-glucose 6-phosphate (oxidative stage): step 2/3. Functionally, catalyzes the hydrolysis of 6-phosphogluconolactone to 6-phosphogluconate. This Cronobacter sakazakii (strain ATCC BAA-894) (Enterobacter sakazakii) protein is 6-phosphogluconolactonase.